The following is a 235-amino-acid chain: Probable ribonuclease P protein subunit 3 (235 aa).

The protein belongs to the eukaryotic/archaeal RNase P protein component 3 family.

It is found in the nucleus. The catalysed reaction is Endonucleolytic cleavage of RNA, removing 5'-extranucleotides from tRNA precursor.. Its function is as follows. Part of ribonuclease P, a protein complex that generates mature tRNA molecules by cleaving their 5'-ends. The sequence is that of Probable ribonuclease P protein subunit 3 from Schizosaccharomyces pombe (strain 972 / ATCC 24843) (Fission yeast).